The following is a 422-amino-acid chain: Adenylosuccinate synthetase (422 aa).

GTP contacts are provided by residues 11 to 17 and 39 to 41; these read GDEGKGK and GHT. The active-site Proton acceptor is Asp-12. Positions 12 and 39 each coordinate Mg(2+). IMP is bound by residues 12-15, 37-40, Thr-129, Arg-143, Asn-219, Thr-234, and Arg-298; these read DEGK and NAGH. The Proton donor role is filled by His-40. A substrate-binding site is contributed by 294–300; the sequence is VTTGRKR. GTP is bound by residues Arg-300, 326–328, and 411–413; these read KLD and GTG.

It belongs to the adenylosuccinate synthetase family. As to quaternary structure, homodimer. Requires Mg(2+) as cofactor.

It is found in the cytoplasm. The catalysed reaction is IMP + L-aspartate + GTP = N(6)-(1,2-dicarboxyethyl)-AMP + GDP + phosphate + 2 H(+). The protein operates within purine metabolism; AMP biosynthesis via de novo pathway; AMP from IMP: step 1/2. Its function is as follows. Plays an important role in the de novo pathway and in the salvage pathway of purine nucleotide biosynthesis. Catalyzes the first committed step in the biosynthesis of AMP from IMP. The sequence is that of Adenylosuccinate synthetase from Talaromyces stipitatus (strain ATCC 10500 / CBS 375.48 / QM 6759 / NRRL 1006) (Penicillium stipitatum).